The primary structure comprises 376 residues: Spermidine/putrescine import ATP-binding protein PotA (376 aa).

One can recognise an ABC transporter domain in the interval Ile-6–Leu-236. Gly-38–Thr-45 is an ATP binding site.

Belongs to the ABC transporter superfamily. Spermidine/putrescine importer (TC 3.A.1.11.1) family. The complex is composed of two ATP-binding proteins (PotA), two transmembrane proteins (PotB and PotC) and a solute-binding protein (PotD).

It is found in the cell inner membrane. The enzyme catalyses ATP + H2O + polyamine-[polyamine-binding protein]Side 1 = ADP + phosphate + polyamineSide 2 + [polyamine-binding protein]Side 1.. Part of the ABC transporter complex PotABCD involved in spermidine/putrescine import. Responsible for energy coupling to the transport system. The sequence is that of Spermidine/putrescine import ATP-binding protein PotA from Fusobacterium nucleatum subsp. nucleatum (strain ATCC 25586 / DSM 15643 / BCRC 10681 / CIP 101130 / JCM 8532 / KCTC 2640 / LMG 13131 / VPI 4355).